A 473-amino-acid polypeptide reads, in one-letter code: MFS transporter prlG (473 aa).

The span at 1–12 (MSSTDAEAKNEE) shows a compositional bias: basic and acidic residues. Residues 1–27 (MSSTDAEAKNEEAVDWEGPDDPENPRN) form a disordered region. The segment covering 13 to 22 (AVDWEGPDDP) has biased composition (acidic residues). Transmembrane regions (helical) follow at residues 37–57 (VLLVSSFTLYSNLAAVMFAPG), 71–91 (IVASLTVSIYILGYVFGPFLL), 101–121 (LIIYHICNAVYIAFTIGCALS), 125–145 (AMFLVFRFICGCAASAPMAIG), 163–183 (ALFGLGPLLGPVIGPVVGGFV), 191–211 (WTFWLVLILAGVVSLLALVLM), 266–286 (PIVFLLSVYCAFMFGLTYLLF), 305–325 (GLAYLGLGVGMIISIGLFAVL), 345–365 (LILMIWSSPLVPIGFFWYGWS), 372–392 (WIVPILGTSVIGLGAFLILMP), and 409–429 (ALAANTVLRSLFGAVLPLAGP).

The protein belongs to the major facilitator superfamily.

The protein resides in the cell membrane. In terms of biological role, efflux pump that might be required for efficient secretion of pyrrolocin or other secondary metabolies produced by the pyrrolocin gene cluster. The protein is MFS transporter prlG of Fungal sp. (strain NRRL 50135).